The sequence spans 914 residues: Golgin candidate 6 (914 aa).

Coiled coils occupy residues isoleucine 723–glycine 837 and glutamate 863–isoleucine 901. Phosphoserine is present on serine 911.

The protein resides in the golgi apparatus. It is found in the golgi stack. In terms of biological role, golgi matrix protein playing a role in tethering of vesicles to Golgi membranes and in maintaining the overall structure of the Golgi apparatus. Functions in the anterograde transport of storage protein precursors from the endoplasmic reticulum (ER) to the Golgi complex. The protein is Golgin candidate 6 (GC6) of Arabidopsis thaliana (Mouse-ear cress).